Here is a 612-residue protein sequence, read N- to C-terminus: Dihydroxy-acid dehydratase (612 aa).

D81 is a Mg(2+) binding site. C122 lines the [2Fe-2S] cluster pocket. Positions 123 and 124 each coordinate Mg(2+). K124 bears the N6-carboxylysine mark. C195 serves as a coordination point for [2Fe-2S] cluster. E491 provides a ligand contact to Mg(2+). The active-site Proton acceptor is the S517.

This sequence belongs to the IlvD/Edd family. In terms of assembly, homodimer. [2Fe-2S] cluster serves as cofactor. Mg(2+) is required as a cofactor.

The enzyme catalyses (2R)-2,3-dihydroxy-3-methylbutanoate = 3-methyl-2-oxobutanoate + H2O. The catalysed reaction is (2R,3R)-2,3-dihydroxy-3-methylpentanoate = (S)-3-methyl-2-oxopentanoate + H2O. The protein operates within amino-acid biosynthesis; L-isoleucine biosynthesis; L-isoleucine from 2-oxobutanoate: step 3/4. It functions in the pathway amino-acid biosynthesis; L-valine biosynthesis; L-valine from pyruvate: step 3/4. Functionally, functions in the biosynthesis of branched-chain amino acids. Catalyzes the dehydration of (2R,3R)-2,3-dihydroxy-3-methylpentanoate (2,3-dihydroxy-3-methylvalerate) into 2-oxo-3-methylpentanoate (2-oxo-3-methylvalerate) and of (2R)-2,3-dihydroxy-3-methylbutanoate (2,3-dihydroxyisovalerate) into 2-oxo-3-methylbutanoate (2-oxoisovalerate), the penultimate precursor to L-isoleucine and L-valine, respectively. This Rhizobium leguminosarum bv. trifolii (strain WSM2304) protein is Dihydroxy-acid dehydratase.